The chain runs to 894 residues: MEKQEILREFSSDPEKYYTVRLFREEGFERRACSVCGRYFWALDGRPACPEDSDDTYSFIGDPPAPRAYDYAQAWRTIEEYFVKNGHESVPRYPVVCRWRDDLYFTIASIVDFQRVMGSSVVFEFPANPLVVPQTCLRFKDLENVGVTGRHFSSFCMIGQHAVPGNGGYWKDECIDLDYGLLVRQLGIPKEEVVFVEDVWAGGGSFGPSLEYYVRGLELGNAVFTEFQGELGNHTTLDRRIIDMGAGLERFAWITTGTPTAYDCCFGPVMGRLAESLGADQDSAELAAYYTRVAVNLGRCGDLNEARRRSAQEAGISDSRMAGAIAPLGEAYMVADHIRTLIFAISDGALPSNVGGGYNLRMMLRRVAGAMERTFPGLDLDELVDLHIDYLMGTYPELDGARQDVKTILDIEASRYGDSKERMGKITAKITDRGRAPGVDELVTLYESDGITPEYLIEAGAIQEVPPEFYSRLDELHAPPPKAAGPGPELAGLADTEMLFYGEDPPEFEARVMHSSDGGVVLDRTSFYARGGGQEPDHGTIGGFRVTDVSKHGGIILHRLDGGSLAEGSTVRCIRDEKRRAGITRNHTSTHILNASARGVLGSWVWQHSAFKEEDHARLDITHHSPLSAAEVKKIEAAANGIVKEDRGVSIGYHPRGEAEQKYGFRIYQGGVVPVSTVRIVTIKGYDDEACGGTHVKSTGEVGLIRITRTKRIQDGVVRLEFVSGDAAIEHERTAAARAEGDRAAEEAKGRLQEERDAGRLKSREIIPGMLEEITGGGSAEGMEVATGPGGRRCLAAGIHDEYFHTSFGKKLVAMDPACAYCAIFEAGPTVRVLAYAGSKSGAGADEIVREVSAVLGGSGGGAAGFAQGGGKDSSKMAEAVARARVLLFGGDNT.

Positions 587, 591, 691, and 695 each coordinate Zn(2+). The tract at residues 739 to 758 (AEGDRAAEEAKGRLQEERDA) is disordered.

Belongs to the class-II aminoacyl-tRNA synthetase family. Zn(2+) is required as a cofactor.

The protein localises to the cytoplasm. It catalyses the reaction tRNA(Ala) + L-alanine + ATP = L-alanyl-tRNA(Ala) + AMP + diphosphate. Functionally, catalyzes the attachment of alanine to tRNA(Ala) in a two-step reaction: alanine is first activated by ATP to form Ala-AMP and then transferred to the acceptor end of tRNA(Ala). Also edits incorrectly charged Ser-tRNA(Ala) and Gly-tRNA(Ala) via its editing domain. The protein is Alanine--tRNA ligase of Cenarchaeum symbiosum (strain A).